The following is a 431-amino-acid chain: Dihydroorotase (431 aa).

Zn(2+) is bound by residues His-59 and His-61. Substrate-binding positions include 61–63 and Asn-93; that span reads HLR. Zn(2+) contacts are provided by Asp-151, His-178, His-231, and Asp-304. Asp-304 is a catalytic residue. Residues His-308 and 322-323 contribute to the substrate site; that span reads FG.

This sequence belongs to the metallo-dependent hydrolases superfamily. DHOase family. Class I DHOase subfamily. The cofactor is Zn(2+).

The catalysed reaction is (S)-dihydroorotate + H2O = N-carbamoyl-L-aspartate + H(+). Its pathway is pyrimidine metabolism; UMP biosynthesis via de novo pathway; (S)-dihydroorotate from bicarbonate: step 3/3. In terms of biological role, catalyzes the reversible cyclization of carbamoyl aspartate to dihydroorotate. This is Dihydroorotase from Thermoanaerobacter sp. (strain X514).